The chain runs to 126 residues: Glycine cleavage system H protein (126 aa).

Residues 22–104 (VATIGITEYA…YEKAWMVKIE (83 aa)) form the Lipoyl-binding domain. N6-lipoyllysine is present on Lys-63.

It belongs to the GcvH family. In terms of assembly, the glycine cleavage system is composed of four proteins: P, T, L and H. It depends on (R)-lipoate as a cofactor.

In terms of biological role, the glycine cleavage system catalyzes the degradation of glycine. The H protein shuttles the methylamine group of glycine from the P protein to the T protein. Functionally, is also involved in protein lipoylation via its role as an octanoyl/lipoyl carrier protein intermediate. The sequence is that of Glycine cleavage system H protein from Staphylococcus epidermidis (strain ATCC 35984 / DSM 28319 / BCRC 17069 / CCUG 31568 / BM 3577 / RP62A).